A 216-amino-acid polypeptide reads, in one-letter code: Protein-L-isoaspartate O-methyltransferase (216 aa).

Ser60 is an active-site residue.

The protein belongs to the methyltransferase superfamily. L-isoaspartyl/D-aspartyl protein methyltransferase family.

It is found in the cytoplasm. It catalyses the reaction [protein]-L-isoaspartate + S-adenosyl-L-methionine = [protein]-L-isoaspartate alpha-methyl ester + S-adenosyl-L-homocysteine. Functionally, catalyzes the methyl esterification of L-isoaspartyl residues in peptides and proteins that result from spontaneous decomposition of normal L-aspartyl and L-asparaginyl residues. It plays a role in the repair and/or degradation of damaged proteins. In Methanococcus aeolicus (strain ATCC BAA-1280 / DSM 17508 / OCM 812 / Nankai-3), this protein is Protein-L-isoaspartate O-methyltransferase.